The sequence spans 464 residues: Argininosuccinate lyase (464 aa).

Belongs to the lyase 1 family. Argininosuccinate lyase subfamily.

It localises to the cytoplasm. It catalyses the reaction 2-(N(omega)-L-arginino)succinate = fumarate + L-arginine. It participates in amino-acid biosynthesis; L-arginine biosynthesis; L-arginine from L-ornithine and carbamoyl phosphate: step 3/3. This chain is Argininosuccinate lyase, found in Pseudomonas fluorescens (strain SBW25).